A 30-amino-acid chain; its full sequence is Putative alpha-amylase inhibitor (30 aa).

Belongs to the leguminous lectin family.

Its function is as follows. Lectin and alpha-amylase inhibitor. Acts as a defensive protein against insects. In Phaseolus vulgaris (Kidney bean), this protein is Putative alpha-amylase inhibitor.